The primary structure comprises 344 residues: tRNA N6-adenosine threonylcarbamoyltransferase (344 aa).

Residues His-111 and His-115 each contribute to the Fe cation site. Substrate contacts are provided by residues 133–137 (VVSGG), Asp-166, Gly-179, Asp-183, and Asn-270. Asp-298 is a Fe cation binding site.

It belongs to the KAE1 / TsaD family. Fe(2+) is required as a cofactor.

The protein localises to the cytoplasm. It catalyses the reaction L-threonylcarbamoyladenylate + adenosine(37) in tRNA = N(6)-L-threonylcarbamoyladenosine(37) in tRNA + AMP + H(+). Required for the formation of a threonylcarbamoyl group on adenosine at position 37 (t(6)A37) in tRNAs that read codons beginning with adenine. Is involved in the transfer of the threonylcarbamoyl moiety of threonylcarbamoyl-AMP (TC-AMP) to the N6 group of A37, together with TsaE and TsaB. TsaD likely plays a direct catalytic role in this reaction. This Persephonella marina (strain DSM 14350 / EX-H1) protein is tRNA N6-adenosine threonylcarbamoyltransferase.